Reading from the N-terminus, the 163-residue chain is Transcriptional repressor NrdR (163 aa).

Residues 3–34 (CPSCNSESSRVVDSRSIEMGVSIRRRRECSEC) fold into a zinc finger. Residues 46-136 (LLVVKRNGVT…VYKSFNCAED (91 aa)) form the ATP-cone domain.

Belongs to the NrdR family. It depends on Zn(2+) as a cofactor.

Negatively regulates transcription of bacterial ribonucleotide reductase nrd genes and operons by binding to NrdR-boxes. The sequence is that of Transcriptional repressor NrdR from Corynebacterium jeikeium (strain K411).